Consider the following 83-residue polypeptide: Small ribosomal subunit protein bS20 (83 aa).

This sequence belongs to the bacterial ribosomal protein bS20 family.

Its function is as follows. Binds directly to 16S ribosomal RNA. This chain is Small ribosomal subunit protein bS20, found in Staphylococcus carnosus (strain TM300).